Reading from the N-terminus, the 267-residue chain is MMELETGQCTIMELKKENVKELAQVFKTVAFKDTGTWHASEAGMKITVDDGSYQLASVFINPAFFSSFKVREEIVSMKISIKSISEFLSISENSSSSVKVSYPGMFQPVKMLVEDADGWVARGNFTTTLADQELDFEFDDAGVLATYLLKTQVLKEIIKDFDDTSRTVRIQFTKNSLCFTTFGDVGETTVSIPSRSLQMESVKCLEEVEFSYLLSLIQRMTTAFILATKLILRVDERGVLSCQFSIDHGEGNASYIEFLTVPADEEE.

This sequence belongs to the Rad1 family. Probable component of the toroidal 9-1-1 (RAD9-RAD1-HUS1) complex, composed of hpr-9, mrt-2 and hus-1. Interacts with hus-1. Might associate with hpr-9.

It is found in the nucleus. The catalysed reaction is Exonucleolytic cleavage in the 3'- to 5'-direction to yield nucleoside 5'-phosphates.. Functionally, may be a component of the 9-1-1 cell-cycle checkpoint response complex that plays a major role in DNA repair. Promotes DNA double strand break-induced cell cycle arrest and apoptosis, thereby playing a role in genome stability. Also required for telomere length maintenance and germline immortality. May possess 3'-&gt;5' double stranded DNA exonuclease activity. This chain is Cell cycle checkpoint protein RAD1 homolog mrt-2, found in Caenorhabditis elegans.